The chain runs to 356 residues: tRNA N6-adenosine threonylcarbamoyltransferase (356 aa).

2 residues coordinate Fe cation: histidine 115 and histidine 119. Residues leucine 138–glycine 142, aspartate 171, glycine 184, and asparagine 283 each bind substrate. A Fe cation-binding site is contributed by aspartate 311.

It belongs to the KAE1 / TsaD family. Requires Fe(2+) as cofactor.

It is found in the cytoplasm. The catalysed reaction is L-threonylcarbamoyladenylate + adenosine(37) in tRNA = N(6)-L-threonylcarbamoyladenosine(37) in tRNA + AMP + H(+). Its function is as follows. Required for the formation of a threonylcarbamoyl group on adenosine at position 37 (t(6)A37) in tRNAs that read codons beginning with adenine. Is involved in the transfer of the threonylcarbamoyl moiety of threonylcarbamoyl-AMP (TC-AMP) to the N6 group of A37, together with TsaE and TsaB. TsaD likely plays a direct catalytic role in this reaction. The polypeptide is tRNA N6-adenosine threonylcarbamoyltransferase (Prochlorococcus marinus (strain NATL2A)).